We begin with the raw amino-acid sequence, 419 residues long: Serine--tRNA ligase (419 aa).

226–228 (TSE) contributes to the L-serine binding site. Residues 257–259 (RRE) and V273 contribute to the ATP site. Position 280 (E280) interacts with L-serine. 344–347 (ELTS) is a binding site for ATP. T379 contacts L-serine.

This sequence belongs to the class-II aminoacyl-tRNA synthetase family. Type-1 seryl-tRNA synthetase subfamily. As to quaternary structure, homodimer. The tRNA molecule binds across the dimer.

It localises to the cytoplasm. It catalyses the reaction tRNA(Ser) + L-serine + ATP = L-seryl-tRNA(Ser) + AMP + diphosphate + H(+). The enzyme catalyses tRNA(Sec) + L-serine + ATP = L-seryl-tRNA(Sec) + AMP + diphosphate + H(+). It participates in aminoacyl-tRNA biosynthesis; selenocysteinyl-tRNA(Sec) biosynthesis; L-seryl-tRNA(Sec) from L-serine and tRNA(Sec): step 1/1. Its function is as follows. Catalyzes the attachment of serine to tRNA(Ser). Is also able to aminoacylate tRNA(Sec) with serine, to form the misacylated tRNA L-seryl-tRNA(Sec), which will be further converted into selenocysteinyl-tRNA(Sec). The polypeptide is Serine--tRNA ligase (Mycobacterium marinum (strain ATCC BAA-535 / M)).